The following is a 446-amino-acid chain: ATP-dependent protease ATPase subunit HslU (446 aa).

ATP is bound by residues Val-17, 59-64 (GVGKTE), Asp-255, Glu-320, and Arg-392.

Belongs to the ClpX chaperone family. HslU subfamily. A double ring-shaped homohexamer of HslV is capped on each side by a ring-shaped HslU homohexamer. The assembly of the HslU/HslV complex is dependent on binding of ATP.

Its subcellular location is the cytoplasm. Functionally, ATPase subunit of a proteasome-like degradation complex; this subunit has chaperone activity. The binding of ATP and its subsequent hydrolysis by HslU are essential for unfolding of protein substrates subsequently hydrolyzed by HslV. HslU recognizes the N-terminal part of its protein substrates and unfolds these before they are guided to HslV for hydrolysis. In Azotobacter vinelandii (strain DJ / ATCC BAA-1303), this protein is ATP-dependent protease ATPase subunit HslU.